The primary structure comprises 322 residues: RNA-binding protein KhpB (322 aa).

The jag_N domain stretch occupies residues 3 to 52; sequence VFEGNTVAAAIAAGLKQLHRTRDQVEVEVIAEAKKGFLGLGKHPAQVRLT. Residues 58 to 82 show a composition bias toward low complexity; it reads AAPATTPTSATATAQQSVATESTTA. The segment at 58 to 162 is disordered; the sequence is AAPATTPTSA…AADQSQTPRT (105 aa). Thr89 is modified (phosphothreonine). Polar residues predominate over residues 89–99; the sequence is TVQTPKSTPTR. Positions 100 to 129 are enriched in low complexity; that stretch reads QAKTSQATTSAAKPATSKAKAVAKPASMAV. The segment covering 141–161 has biased composition (polar residues); the sequence is SKPATTSKTKSVAADQSQTPR. One can recognise a KH domain in the interval 174 to 251; that stretch reads ETAVRALCDY…ASHVNVVLDV (78 aa). An R3H domain is found at 256-322; it reads ERRAATLKRL…HRAVVVAIRK (67 aa).

As to quaternary structure, forms a complex with KhpA.

The protein localises to the cytoplasm. Its function is as follows. A probable RNA chaperone. Forms a complex with KhpA which binds to cellular RNA and controls its expression. Plays a role in peptidoglycan (PG) homeostasis and cell length regulation. Necessary for correct cell elongation. In Lactiplantibacillus plantarum (strain ATCC BAA-793 / NCIMB 8826 / WCFS1) (Lactobacillus plantarum), this protein is RNA-binding protein KhpB.